We begin with the raw amino-acid sequence, 348 residues long: [LysW]-L-2-aminoadipate 6-phosphate reductase (348 aa).

14–17 contributes to the NADP(+) binding site; the sequence is SGYA. Residue cysteine 151 is part of the active site. Asparagine 315 serves as a coordination point for NADP(+).

It belongs to the NAGSA dehydrogenase family. Type 1 subfamily. LysY sub-subfamily.

Its subcellular location is the cytoplasm. It carries out the reaction [amino-group carrier protein]-C-terminal-N-(1-carboxy-5-oxopentan-1-yl)-L-glutamine + phosphate + NADP(+) = [amino-group carrier protein]-C-terminal-N-(1-carboxy-5-phosphooxy-5-oxopentan-1-yl)-L-glutamine + NADPH + H(+). Its pathway is amino-acid biosynthesis; L-lysine biosynthesis via AAA pathway; L-lysine from L-alpha-aminoadipate (Thermus route): step 3/5. Functionally, catalyzes the NADPH-dependent reduction of [LysW]-aminoadipate 6-phosphate to yield [LysW]-aminoadipate 6-semialdehyde. The chain is [LysW]-L-2-aminoadipate 6-phosphate reductase from Deinococcus radiodurans (strain ATCC 13939 / DSM 20539 / JCM 16871 / CCUG 27074 / LMG 4051 / NBRC 15346 / NCIMB 9279 / VKM B-1422 / R1).